Consider the following 472-residue polypeptide: Adenosylhomocysteinase (472 aa).

Positions 63, 138, and 198 each coordinate substrate. 199–201 (TTT) is a binding site for NAD(+). Positions 228 and 232 each coordinate substrate. NAD(+) is bound by residues N233, 262–267 (GYGDVG), E285, N320, 341–343 (IGH), and N386.

The protein belongs to the adenosylhomocysteinase family. NAD(+) is required as a cofactor.

It is found in the cytoplasm. It catalyses the reaction S-adenosyl-L-homocysteine + H2O = L-homocysteine + adenosine. Its pathway is amino-acid biosynthesis; L-homocysteine biosynthesis; L-homocysteine from S-adenosyl-L-homocysteine: step 1/1. In terms of biological role, may play a key role in the regulation of the intracellular concentration of adenosylhomocysteine. The sequence is that of Adenosylhomocysteinase from Methylococcus capsulatus (strain ATCC 33009 / NCIMB 11132 / Bath).